The primary structure comprises 157 residues: Transcriptional repressor NrdR (157 aa).

Residues 3-34 (CPHCHQNSSRVIDSRPTDEGRVIRRRRECENC) fold into a zinc finger. The 91-residue stretch at 49–139 (LLVIKKNGTR…VYRQFKDMNV (91 aa)) folds into the ATP-cone domain.

Belongs to the NrdR family. Zn(2+) is required as a cofactor.

In terms of biological role, negatively regulates transcription of bacterial ribonucleotide reductase nrd genes and operons by binding to NrdR-boxes. This Latilactobacillus sakei subsp. sakei (strain 23K) (Lactobacillus sakei subsp. sakei) protein is Transcriptional repressor NrdR.